The following is a 267-amino-acid chain: Undecaprenyl-diphosphatase (267 aa).

The next 7 helical transmembrane spans lie at 4–24, 41–61, 69–89, 96–116, 173–193, 207–227, and 239–259; these read LYAL…ISST, FWKS…IFVF, LDIW…GLFV, LFNG…FILI, AAEF…AYSI, IPLG…IKFF, and FGIY…SGIL.

Belongs to the UppP family.

It is found in the cell inner membrane. The enzyme catalyses di-trans,octa-cis-undecaprenyl diphosphate + H2O = di-trans,octa-cis-undecaprenyl phosphate + phosphate + H(+). Catalyzes the dephosphorylation of undecaprenyl diphosphate (UPP). Confers resistance to bacitracin. This chain is Undecaprenyl-diphosphatase, found in Campylobacter jejuni subsp. jejuni serotype O:23/36 (strain 81-176).